The sequence spans 635 residues: DNA mismatch repair protein MutL (635 aa).

This sequence belongs to the DNA mismatch repair MutL/HexB family.

This protein is involved in the repair of mismatches in DNA. It is required for dam-dependent methyl-directed DNA mismatch repair. May act as a 'molecular matchmaker', a protein that promotes the formation of a stable complex between two or more DNA-binding proteins in an ATP-dependent manner without itself being part of a final effector complex. The polypeptide is DNA mismatch repair protein MutL (Yersinia pestis bv. Antiqua (strain Angola)).